The sequence spans 67 residues: DNA-directed RNA polymerase subunit omega (67 aa).

This sequence belongs to the RNA polymerase subunit omega family. As to quaternary structure, the RNAP catalytic core consists of 2 alpha, 1 beta, 1 beta' and 1 omega subunit. When a sigma factor is associated with the core the holoenzyme is formed, which can initiate transcription.

It catalyses the reaction RNA(n) + a ribonucleoside 5'-triphosphate = RNA(n+1) + diphosphate. Promotes RNA polymerase assembly. Latches the N- and C-terminal regions of the beta' subunit thereby facilitating its interaction with the beta and alpha subunits. This is DNA-directed RNA polymerase subunit omega from Listeria welshimeri serovar 6b (strain ATCC 35897 / DSM 20650 / CCUG 15529 / CIP 8149 / NCTC 11857 / SLCC 5334 / V8).